A 251-amino-acid polypeptide reads, in one-letter code: Hydroxyacylglutathione hydrolase (251 aa).

7 residues coordinate Zn(2+): H53, H55, D57, H58, H110, D127, and H165.

It belongs to the metallo-beta-lactamase superfamily. Glyoxalase II family. Monomer. Requires Zn(2+) as cofactor.

It carries out the reaction an S-(2-hydroxyacyl)glutathione + H2O = a 2-hydroxy carboxylate + glutathione + H(+). It participates in secondary metabolite metabolism; methylglyoxal degradation; (R)-lactate from methylglyoxal: step 2/2. Thiolesterase that catalyzes the hydrolysis of S-D-lactoyl-glutathione to form glutathione and D-lactic acid. This chain is Hydroxyacylglutathione hydrolase, found in Yersinia pestis.